The primary structure comprises 199 residues: ATP-dependent Clp protease proteolytic subunit (199 aa).

Ser98 (nucleophile) is an active-site residue. The active site involves His123.

Belongs to the peptidase S14 family. As to quaternary structure, fourteen ClpP subunits assemble into 2 heptameric rings which stack back to back to give a disk-like structure with a central cavity, resembling the structure of eukaryotic proteasomes.

It is found in the cytoplasm. It carries out the reaction Hydrolysis of proteins to small peptides in the presence of ATP and magnesium. alpha-casein is the usual test substrate. In the absence of ATP, only oligopeptides shorter than five residues are hydrolyzed (such as succinyl-Leu-Tyr-|-NHMec, and Leu-Tyr-Leu-|-Tyr-Trp, in which cleavage of the -Tyr-|-Leu- and -Tyr-|-Trp bonds also occurs).. In terms of biological role, cleaves peptides in various proteins in a process that requires ATP hydrolysis. Has a chymotrypsin-like activity. Plays a major role in the degradation of misfolded proteins. The sequence is that of ATP-dependent Clp protease proteolytic subunit from Ehrlichia chaffeensis (strain ATCC CRL-10679 / Arkansas).